The primary structure comprises 95 residues: Nickel-cobalt-cadmium resistance protein NccY (95 aa).

To A.eutrophus CnrY.

Component of the NCC cation-efflux system that confers resistance to nickel, cobalt and cadmium. May be involved in the regulation of NCC. This is Nickel-cobalt-cadmium resistance protein NccY (nccY) from Alcaligenes xylosoxydans xylosoxydans (Achromobacter xylosoxidans).